Consider the following 598-residue polypeptide: Insulin-like growth factor 2 mRNA-binding protein 1 (598 aa).

2 RRM domains span residues 2 to 75 (NKLY…HSVP) and 81 to 156 (RKLQ…YIPD). The segment at 155–195 (PDENSEVDSQRGPDNGRRPGYGPRGTSRQMSPGSGIPSKHQ) is disordered. A compositionally biased stretch (basic and acidic residues) spans 162–171 (DSQRGPDNGR). Serine 185 is subject to Phosphoserine. KH domains lie at 198–263 (DIPL…CRMI) and 279–346 (EVPL…EQEI). Tyrosine 399 is modified (phosphotyrosine). 2 KH domains span residues 407–472 (QETV…QGRI) and 489–555 (KLET…QRKI). The tract at residues 561–598 (QVKQQQKGGGMGTPQGPHPQGMTELGSPQGLAQEPRRK) is disordered. Residues threonine 573 and threonine 583 each carry the phosphothreonine modification. Over residues 574–583 (PQGPHPQGMT) the composition is skewed to low complexity. Serine 587 is modified (phosphoserine).

It belongs to the RRM IMP/VICKZ family. Component of the CRD-mediated complex.

The protein localises to the nucleus. Its subcellular location is the cytoplasm. It is found in the perinuclear region. The protein resides in the P-body. It localises to the stress granule. The protein localises to the cell projection. Its subcellular location is the growth cone. It is found in the filopodium. The protein resides in the lamellipodium. In terms of biological role, RNA-binding factor that recruits target transcripts to cytoplasmic protein-RNA complexes (mRNPs). This transcript 'caging' into mRNPs allows mRNA transport and transient storage. It also modulates the rate and location at which target transcripts encounter the translational apparatus and shields them from endonuclease attacks or microRNA-mediated degradation. Preferentially binds to N6-methyladenosine (m6A)-containing mRNAs and increases their stability. Plays a direct role in the transport and translation of transcripts required for axonal regeneration in adult sensory neurons. Regulates localized beta-actin/ACTB mRNA translation in polarized cells, a crucial process for cell migration and neurite outgrowth. Promotes the directed movement of cells by fine-tuning intracellular signaling networks and enhances the velocity of cell migration. This is Insulin-like growth factor 2 mRNA-binding protein 1 (igf2bp1) from Danio rerio (Zebrafish).